The sequence spans 100 residues: MKVTDVRLRKIQTDGRMKALVSITLDEAFVIHDLRVIEGNSGLFVAMPSKRTPDGEFRDIAHPINSDMRQEIQDAVMKVYDETDEVIPDKNASSEDSDEA.

Belongs to the SpoVG family.

Its function is as follows. Could be involved in septation. This chain is Putative septation protein SpoVG, found in Staphylococcus haemolyticus (strain JCSC1435).